A 273-amino-acid chain; its full sequence is Acetyl-coenzyme A carboxylase carboxyl transferase subunit alpha (273 aa).

Residues 1 to 244 enclose the CoA carboxyltransferase C-terminal domain; that stretch reads MKKATQSKAW…KVVLKQALDE (244 aa).

Belongs to the AccA family. As to quaternary structure, acetyl-CoA carboxylase is a heterohexamer composed of biotin carboxyl carrier protein (AccB), biotin carboxylase (AccC) and two subunits each of ACCase subunit alpha (AccA) and ACCase subunit beta (AccD).

It localises to the cytoplasm. The catalysed reaction is N(6)-carboxybiotinyl-L-lysyl-[protein] + acetyl-CoA = N(6)-biotinyl-L-lysyl-[protein] + malonyl-CoA. The protein operates within lipid metabolism; malonyl-CoA biosynthesis; malonyl-CoA from acetyl-CoA: step 1/1. Functionally, component of the acetyl coenzyme A carboxylase (ACC) complex. First, biotin carboxylase catalyzes the carboxylation of biotin on its carrier protein (BCCP) and then the CO(2) group is transferred by the carboxyltransferase to acetyl-CoA to form malonyl-CoA. In Acinetobacter baumannii (strain AB0057), this protein is Acetyl-coenzyme A carboxylase carboxyl transferase subunit alpha.